The following is a 331-amino-acid chain: Protein-methionine-sulfoxide reductase catalytic subunit MsrP (331 aa).

Residues 1-57 (MLIKKTLRAALAGDDIPRSEITPRAVFEHRRRILQAAGAAAAGGLVGAHGLALAAYA) constitute a signal peptide (tat-type signal). Mo-molybdopterin is bound by residues Asn90, 93–94 (YE), Cys148, Thr183, Asn231, Arg236, and 247–249 (SAK).

It belongs to the MsrP family. Heterodimer of a catalytic subunit (MsrP) and a heme-binding subunit (MsrQ). Requires Mo-molybdopterin as cofactor. In terms of processing, predicted to be exported by the Tat system. The position of the signal peptide cleavage has not been experimentally proven.

The protein localises to the periplasm. The catalysed reaction is L-methionyl-[protein] + a quinone + H2O = L-methionyl-(S)-S-oxide-[protein] + a quinol. The enzyme catalyses L-methionyl-[protein] + a quinone + H2O = L-methionyl-(R)-S-oxide-[protein] + a quinol. Functionally, part of the MsrPQ system that repairs oxidized periplasmic proteins containing methionine sulfoxide residues (Met-O), using respiratory chain electrons. Thus protects these proteins from oxidative-stress damage caused by reactive species of oxygen and chlorine generated by the host defense mechanisms. MsrPQ is essential for the maintenance of envelope integrity under bleach stress, rescuing a wide series of structurally unrelated periplasmic proteins from methionine oxidation. The catalytic subunit MsrP is non-stereospecific, being able to reduce both (R-) and (S-) diastereoisomers of methionine sulfoxide. This is Protein-methionine-sulfoxide reductase catalytic subunit MsrP from Burkholderia mallei (strain ATCC 23344).